Reading from the N-terminus, the 1411-residue chain is Alpha-latroinsectotoxin-Lt1a (1411 aa).

Residues 1 to 35 (ACSSPEVSIFHFFVYAGSFVKNFKKMKGSSAISKR) constitute a propeptide that is removed on maturation. The interval 245-264 (ALYALFYGTETFISIMFYLV) is helix H8 is the probable transmembrane region of the tetrameric pore inserted in the target cell membrane. ANK repeat units follow at residues 462–495 (DIHR…NVSE), 499–528 (LGRG…NLLE), 533–562 (NGYT…DVNV), 567–597 (DLFT…DLNA), 601–630 (SGFT…VINI), 634–663 (VGLT…YLND), 667–697 (NGMT…NINA), 702–732 (KKWT…NIRL), 736–765 (GGIN…DVTR), 769–798 (KGFS…NVND), 802–831 (SGVT…DIKA), 835–864 (NSQM…SLMN), 869–898 (RNEY…NVNE), 902–931 (NGNT…NFRL), 935–965 (ERKT…NLQA), 968–999 (RGKT…LNES), 1000–1029 (ECNP…NPAE), 1080–1109 (QENT…DPNQ), 1112–1142 (DGDP…DINT), and 1146–1175 (ERFT…DVNA). A propeptide spanning residues 1196-1411 (QSSRFLRSGH…KVNSNVSQIK (216 aa)) is cleaved from the precursor. Positions 1230–1249 (DKLTQQISSKGTRSDSNSTE) are enriched in polar residues. A disordered region spans residues 1230–1254 (DKLTQQISSKGTRSDSNSTEGKMHS). An ANK 21 repeat occupies 1331–1361 (NVHSKIYKAIMSGRRSVISEMLCSFAEEYSK).

This sequence belongs to the cationic peptide 01 (latrotoxin) family. 02 (alpha-latroinsectotoxin) subfamily. Homotetramer in membranes. As to expression, expressed by the venom gland.

The protein resides in the secreted. The protein localises to the target cell membrane. Functionally, insecticidal presynaptic neurotoxin that induces massive neurotransmitter release at insect (but not vertebrate) neuromuscular junctions. Native toxin forms cation-permeable pores (with high permeability to calcium) in lipid membranes locust muscle membrane and artificial lipid bilayers. May bind to insect neurexin-1 homolog, insect adhesion G protein-coupled receptor L1 homolog, and insect receptor-type tyrosine-protein phosphatase S homolog, and induces neurotransmitter exocytosis both by forming tetrameric pores in membranes and signaling via G protein-coupled receptor. Oligomerization is a process independent of divalent cations. The toxin forms channels with 0.55-0.58 nm entrance diameter and a relatively small conductance in planar phospholipid membranes. In Latrodectus tredecimguttatus (Mediterranean black widow spider), this protein is Alpha-latroinsectotoxin-Lt1a.